A 67-amino-acid chain; its full sequence is DNA gyrase inhibitor YacG (67 aa).

Residues cysteine 8, cysteine 11, cysteine 27, and cysteine 31 each contribute to the Zn(2+) site.

The protein belongs to the DNA gyrase inhibitor YacG family. In terms of assembly, interacts with GyrB. Zn(2+) serves as cofactor.

Inhibits all the catalytic activities of DNA gyrase by preventing its interaction with DNA. Acts by binding directly to the C-terminal domain of GyrB, which probably disrupts DNA binding by the gyrase. This is DNA gyrase inhibitor YacG from Ralstonia pickettii (strain 12J).